Consider the following 776-residue polypeptide: Kinesin-like protein KLP1 (776 aa).

The Kinesin motor domain maps to 5-335; it reads AVKVFVRTRP…LRFASRVRTL (331 aa). 91-98 lines the ATP pocket; that stretch reads GQTGAGKT. A coiled-coil region spans residues 348 to 371; that stretch reads ALLLRRYERQIKELKAELAMRDTL. The tract at residues 441–535 is disordered; sequence RRATEEGSGA…SNWGDAGPLS (95 aa). Residues 447–460 are compositionally biased toward low complexity; it reads GSGAAARGGDSAGP. Residues 579–657 adopt a coiled-coil conformation; that stretch reads ALADTKASIR…SLKSAREELE (79 aa). The globular stretch occupies residues 658 to 776; sequence PQIQAVAVAR…TQAVNRGLAR (119 aa).

This sequence belongs to the TRAFAC class myosin-kinesin ATPase superfamily. Kinesin family.

It localises to the cytoplasm. Its subcellular location is the cytoskeleton. It is found in the flagellum axoneme. May play a role in rotation or twisting of the central pair microtubules of the flagella axoneme. The chain is Kinesin-like protein KLP1 (KLP1) from Chlamydomonas reinhardtii (Chlamydomonas smithii).